Consider the following 227-residue polypeptide: uncharacterized protein (227 aa).

Positions 1–23 (MKKRFSLIMMTGLLFGLTSPAFA) are cleaved as a signal peptide. Residues 36–227 (NVAVLLDASG…FTQQSLMLSK (192 aa)) form the VWFA domain.

To B.subtilis YwmD.

This is an uncharacterized protein from Bacillus subtilis (strain 168).